Consider the following 384-residue polypeptide: Soluble hydrogenase, small subunit (384 aa).

An N6-(pyridoxal phosphate)lysine modification is found at Lys194.

The protein belongs to the class-V pyridoxal-phosphate-dependent aminotransferase family. In terms of assembly, heterodimer of a large and a small subunit. Pyridoxal 5'-phosphate serves as cofactor.

The protein localises to the cytoplasm. Its function is as follows. Soluble hydrogenase catalyzes both production and consumption of hydrogen from suitable artificial electron donors or acceptors. This subunit catalyzes the tritium-exchange activity. This Synechococcus sp. (strain PCC 6716) protein is Soluble hydrogenase, small subunit.